The following is a 753-amino-acid chain: MDVNPTLLFLKVPVQNAISTTFPYTGDPPYSHGTGTGYTMDTVNRTHQYSEKGKWTTNTETGAPQLNPIDGPLPEDNEPSGYAQTDCVLEAMAFLEESHPGIFENSCLETMEIVQQTRVDKLTQGRQTYDWTLNRNQPAATALANTIEIFRSNGLTANESGRLIDFLKDVMESMDKEEMEITTHFQRKRRVRDNMTKKMVTQRTIGKKKQRLNKKSYLIRALTLNTMTKDAERGKLKRRAIATPGMQIRGFVYFVETLARSICEKLEQSGLPVGGNEKKAKLANVVRKMMTNSQDTELSFTITGDNTKWNENQNPRMFLAMITYITRNQPEWFRNVLSIAPIMFSNKMARLGKGYMFESKSMKLRTQIPAEMLANIDLKYFNELTKKKIEKIRPLLIDGTASLSPGMMMGMFNMLSTVLGVSILNLGQKRYTKTTYWWDGLQSSDDFALIVNAPNHEGIQAGVDRFYRTCKLVGINMSKKKSYINRTGTFEFTSFFYRYGFVANFRMELPSFGVSGINESADMSIGVTVIKNNMINNDLGPATAQMALQLFIKDYRYTYRCHRGDTQIQTRRSFELKKLWEQTRSKAGLLVSDGGPNLYNIRNLHIPEVCLKWELMDEDYQGRLCNPLNPFVSHKEIESVNNAVVMPAHGPAKSMEYDAVATTHSWIPKRNRSILNTSQRGILEDEQMYQKCCNLFEKFFPSSSYRRPVGISSMVEAMVSRARIDARIDFESGRIKKEEFAEIMKICSTIEEL.

The disordered stretch occupies residues 52-82; that stretch reads KGKWTTNTETGAPQLNPIDGPLPEDNEPSGY. Residues 55-64 are compositionally biased toward polar residues; it reads WTTNTETGAP. 2 short sequence motifs (nuclear localization signal) span residues 187-195 and 203-216; these read RKRRVRDNM and RTIG…NKKS. The tract at residues 249–256 is promoter-binding site; that stretch reads RGFVYFVE. Residues 286–483 form the RdRp catalytic domain; the sequence is VRKMMTNSQD…GINMSKKKSY (198 aa).

This sequence belongs to the influenza viruses polymerase PB1 family. Influenza RNA polymerase is composed of three subunits: PB1, PB2 and PA. Interacts (via N-terminus) with PA (via C-terminus). Interacts (via C-terminus) with PB2 (via N-terminus); this interaction is essential for transcription initiation. Phosphorylated by host PRKCA.

It is found in the host nucleus. It localises to the host cytoplasm. It carries out the reaction RNA(n) + a ribonucleoside 5'-triphosphate = RNA(n+1) + diphosphate. In terms of biological role, RNA-dependent RNA polymerase which is responsible for replication and transcription of virus RNA segments. The transcription of viral mRNAs occurs by a unique mechanism called cap-snatching. 5' methylated caps of cellular mRNAs are cleaved after 10-13 nucleotides by PA. In turn, these short capped RNAs are used as primers by PB1 for transcription of viral mRNAs. During virus replication, PB1 initiates RNA synthesis and copy vRNA into complementary RNA (cRNA) which in turn serves as a template for the production of more vRNAs. The protein is RNA-directed RNA polymerase catalytic subunit of Influenza A virus (strain A/Chicken/Hong Kong/96.1/2002 H5N1 genotype Y).